The following is a 1050-amino-acid chain: Calmodulin-binding transcription activator 2 (1050 aa).

The segment at residues 15-141 (IKQLLSEAQH…YLEVKGNRMS (127 aa)) is a DNA-binding region (CG-1). 2 stretches are compositionally biased toward polar residues: residues 141-171 (STSG…SSIL) and 183-196 (SRQA…NPEP). Disordered stretches follow at residues 141–196 (STSG…NPEP) and 223–246 (NRDG…SGDV). 2 ANK repeats span residues 661-690 (DGQG…SINF) and 694-723 (NGWS…DAGA). IQ domains follow at residues 870–899 (VHAA…RIVK) and 893–922 (IRQR…SVGL). Residues 918-940 (WSVGLLEKIILRWRRKGSGLRGF) form a calmodulin-binding region. The stretch at 957–985 (QEDDYDFLKEGRKQTEERLQKALTRVKSM) forms a coiled coil. S984 bears the Phosphoserine mark.

It belongs to the CAMTA family. Expressed in roots, stems, old leaves, petals, sepals, top of carpels, stigmas, stamen filaments, anthers and siliques, but not in pollen.

It is found in the nucleus. Functionally, transcription activator that binds to the DNA consensus sequence 5'-[ACG]CGCG[GTC]-3'. Regulates transcriptional activity in response to calcium signals. Binds calmodulin in a calcium-dependent manner. Involved in freezing tolerance in association with CAMTA1 and CAMTA3. Contributes together with CAMTA1 and CAMTA3 to the positive regulation of the cold-induced expression of DREB1A/CBF3, DREB1B/CBF1 and DREB1C/CBF2. Involved together with CAMTA3 and CAMTA4 in the positive regulation of a general stress response. Involved in tolerance to aluminum. Binds to the promoter of ALMT1 transporter and contributes to the positive regulation of aluminum-induced expression of ALMT1. In Arabidopsis thaliana (Mouse-ear cress), this protein is Calmodulin-binding transcription activator 2.